The sequence spans 319 residues: Pantothenate kinase (319 aa).

101 to 108 (GSVAVGKS) contacts ATP.

It belongs to the prokaryotic pantothenate kinase family.

The protein resides in the cytoplasm. The catalysed reaction is (R)-pantothenate + ATP = (R)-4'-phosphopantothenate + ADP + H(+). It functions in the pathway cofactor biosynthesis; coenzyme A biosynthesis; CoA from (R)-pantothenate: step 1/5. The sequence is that of Pantothenate kinase from Clavibacter michiganensis subsp. michiganensis (strain NCPPB 382).